Consider the following 447-residue polypeptide: N-succinylarginine dihydrolase (447 aa).

Substrate contacts are provided by residues 19–28 (AGLSFGNEAS), Asn110, and 137–138 (HR). The active site involves Glu174. Arg212 provides a ligand contact to substrate. His248 is an active-site residue. The substrate site is built by Asp250 and Asn359. The active-site Nucleophile is Cys365.

Belongs to the succinylarginine dihydrolase family. As to quaternary structure, homodimer.

The enzyme catalyses N(2)-succinyl-L-arginine + 2 H2O + 2 H(+) = N(2)-succinyl-L-ornithine + 2 NH4(+) + CO2. The protein operates within amino-acid degradation; L-arginine degradation via AST pathway; L-glutamate and succinate from L-arginine: step 2/5. Functionally, catalyzes the hydrolysis of N(2)-succinylarginine into N(2)-succinylornithine, ammonia and CO(2). This is N-succinylarginine dihydrolase from Escherichia coli (strain SMS-3-5 / SECEC).